The chain runs to 277 residues: Anamorsin homolog 2 (277 aa).

Positions 1–141 (MDTQPIVLVI…RKPAWDTGSS (141 aa)) are N-terminal SAM-like domain. The tract at residues 141–186 (SFKLKKKVAQKPANVVTFDIPAFKVQLGDDLDDLIDEDSLLTEEDL) is linker. 4 residues coordinate [2Fe-2S] cluster: C197, C207, C210, and C212. Residues 197–212 (CEVGKAGRKACKNCTC) form a fe-S binding site A region. Residues C238, C241, C249, and C252 each coordinate [4Fe-4S] cluster. 2 short sequence motifs (cx2C motif) span residues 238–241 (CGSC) and 249–252 (CSTC). The segment at 238 to 252 (CGSCGLGDAFRCSTC) is fe-S binding site B.

Belongs to the anamorsin family. Monomer. Requires [2Fe-2S] cluster as cofactor. [4Fe-4S] cluster serves as cofactor.

The protein localises to the cytoplasm. It is found in the mitochondrion intermembrane space. In terms of biological role, component of the cytosolic iron-sulfur (Fe-S) protein assembly (CIA) machinery. Required for the maturation of extramitochondrial Fe-S proteins. Part of an electron transfer chain functioning in an early step of cytosolic Fe-S biogenesis, facilitating the de novo assembly of a [4Fe-4S] cluster on the cytosolic Fe-S scaffold complex. Electrons are transferred from NADPH via a FAD- and FMN-containing diflavin oxidoreductase. Together with the diflavin oxidoreductase, also required for the assembly of the diferric tyrosyl radical cofactor of ribonucleotide reductase (RNR), probably by providing electrons for reduction during radical cofactor maturation in the catalytic small subunit. The polypeptide is Anamorsin homolog 2 (Picea sitchensis (Sitka spruce)).